Reading from the N-terminus, the 314-residue chain is Olfactory receptor 10T2 (314 aa).

At 1–26 the chain is on the extracellular side; sequence MRGFNKTTVVTQFILVGFSSLGELQL. Asn-5 is a glycosylation site (N-linked (GlcNAc...) asparagine). Residues 27–47 traverse the membrane as a helical segment; the sequence is LLFVIFLLLYLTILVANVTIM. At 48–55 the chain is on the cytoplasmic side; that stretch reads AVIRFSWT. Residues 56-76 form a helical membrane-spanning segment; the sequence is LHTPMYGFLFILSFSESCYTF. Topologically, residues 77–100 are extracellular; that stretch reads VIIPQLLVHLLSDTKTISFMACAT. A disulfide bridge connects residues Cys-98 and Cys-190. A helical transmembrane segment spans residues 101–121; sequence QLFFFLGFACTNCLLIAVMGY. Topologically, residues 122 to 140 are cytoplasmic; sequence DRYVAICHPLRYTLIINKR. A helical membrane pass occupies residues 141 to 161; the sequence is LGLELISLSGATGFFIALVAT. The Extracellular portion of the chain corresponds to 162–198; sequence NLICDMRFCGPNRVNHYFCDMAPVIKLACTDTHVKEL. Residues 199–218 traverse the membrane as a helical segment; that stretch reads ALFSLSILVIMVPFLLILIS. The Cytoplasmic portion of the chain corresponds to 219 to 237; it reads YGFIVNTILKIPSAEGKKA. The chain crosses the membrane as a helical span at residues 238 to 258; it reads FVTCASHLTVVFVHYGCASII. Over 259–271 the chain is Extracellular; it reads YLRPKSKSASDKD. A helical transmembrane segment spans residues 272 to 292; it reads QLVAVTYTVVTPLLNPLVYSL. Topologically, residues 293–314 are cytoplasmic; the sequence is RNKEVKTALKRVLGMPVATKMS.

The protein belongs to the G-protein coupled receptor 1 family.

The protein localises to the cell membrane. Odorant receptor. In Homo sapiens (Human), this protein is Olfactory receptor 10T2 (OR10T2).